A 532-amino-acid chain; its full sequence is 2,3-bisphosphoglycerate-independent phosphoglycerate mutase (532 aa).

Aspartate 15 and serine 65 together coordinate Mn(2+). The active-site Phosphoserine intermediate is serine 65. Substrate is bound by residues histidine 126, 156-157 (RD), arginine 188, arginine 194, 258-261 (RPDR), and lysine 331. Positions 398, 402, 439, 440, and 457 each coordinate Mn(2+).

This sequence belongs to the BPG-independent phosphoglycerate mutase family. Monomer. The cofactor is Mn(2+).

It carries out the reaction (2R)-2-phosphoglycerate = (2R)-3-phosphoglycerate. It participates in carbohydrate degradation; glycolysis; pyruvate from D-glyceraldehyde 3-phosphate: step 3/5. Functionally, catalyzes the interconversion of 2-phosphoglycerate and 3-phosphoglycerate. This Synechocystis sp. (strain ATCC 27184 / PCC 6803 / Kazusa) protein is 2,3-bisphosphoglycerate-independent phosphoglycerate mutase.